The following is a 232-amino-acid chain: Ribonuclease 3 (232 aa).

Positions 6-135 (QDYLAKTYGI…FIGALYLDQG (130 aa)) constitute an RNase III domain. Residue glutamate 48 coordinates Mg(2+). Aspartate 52 is an active-site residue. Aspartate 121 and glutamate 124 together coordinate Mg(2+). Residue glutamate 124 is part of the active site. The region spanning 161–230 (DAKTSLQEFL…AKHALEKLRM (70 aa)) is the DRBM domain.

This sequence belongs to the ribonuclease III family. In terms of assembly, homodimer. It depends on Mg(2+) as a cofactor.

Its subcellular location is the cytoplasm. It carries out the reaction Endonucleolytic cleavage to 5'-phosphomonoester.. In terms of biological role, digests double-stranded RNA. Involved in the processing of primary rRNA transcript to yield the immediate precursors to the large and small rRNAs (23S and 16S). Processes some mRNAs, and tRNAs when they are encoded in the rRNA operon. Processes pre-crRNA and tracrRNA of type II CRISPR loci if present in the organism. The sequence is that of Ribonuclease 3 from Limosilactobacillus fermentum (strain NBRC 3956 / LMG 18251) (Lactobacillus fermentum).